Here is a 500-residue protein sequence, read N- to C-terminus: Probable glycine dehydrogenase (decarboxylating) subunit 2 (500 aa).

The disordered stretch occupies residues 1–25 (MLIFEHSRPGRRNYSQSPKAAEATD). At Lys263 the chain carries N6-(pyridoxal phosphate)lysine.

Belongs to the GcvP family. C-terminal subunit subfamily. The glycine cleavage system is composed of four proteins: P, T, L and H. In this organism, the P 'protein' is a heterodimer of two subunits. It depends on pyridoxal 5'-phosphate as a cofactor.

It carries out the reaction N(6)-[(R)-lipoyl]-L-lysyl-[glycine-cleavage complex H protein] + glycine + H(+) = N(6)-[(R)-S(8)-aminomethyldihydrolipoyl]-L-lysyl-[glycine-cleavage complex H protein] + CO2. In terms of biological role, the glycine cleavage system catalyzes the degradation of glycine. The P protein binds the alpha-amino group of glycine through its pyridoxal phosphate cofactor; CO(2) is released and the remaining methylamine moiety is then transferred to the lipoamide cofactor of the H protein. This chain is Probable glycine dehydrogenase (decarboxylating) subunit 2, found in Nitrosospira multiformis (strain ATCC 25196 / NCIMB 11849 / C 71).